The chain runs to 160 residues: Putative pre-16S rRNA nuclease (160 aa).

This sequence belongs to the YqgF nuclease family.

Its subcellular location is the cytoplasm. Its function is as follows. Could be a nuclease involved in processing of the 5'-end of pre-16S rRNA. The protein is Putative pre-16S rRNA nuclease of Rhodopseudomonas palustris (strain BisB5).